A 177-amino-acid chain; its full sequence is ADP-ribosylation factor-like protein 3 (177 aa).

A lipid anchor (N-myristoyl glycine) is attached at Gly2. Residues Gly23–Thr31, Asn125–Asp128, and Ala159 contribute to the GTP site.

Belongs to the small GTPase superfamily. Arf family.

It is found in the golgi apparatus membrane. It localises to the cytoplasm. The protein localises to the cytoskeleton. The protein resides in the spindle. Its subcellular location is the nucleus. It is found in the microtubule organizing center. Its function is as follows. Small GTP-binding protein which cycles between an inactive GDP-bound and an active GTP-bound form, and the rate of cycling is regulated by guanine nucleotide exchange factors (GEF) and GTPase-activating proteins (GAP). Required for normal cytokinesis and cilia signaling. Required for targeting proteins to the ciliary membrane by releasing myristoylated protein from unc119 cargo adapters into the cilium. The chain is ADP-ribosylation factor-like protein 3 from Chlamydomonas reinhardtii (Chlamydomonas smithii).